The following is a 307-amino-acid chain: Protein Y (307 aa).

Belongs to the ATP-dependent AMP-binding enzyme family.

It participates in antibiotic biosynthesis; candicidin biosynthesis. In terms of biological role, may be a p-aminobenzoic acid-CoA ligase that activates PabA to start the biosynthesis of candicidin. This chain is Protein Y, found in Streptomyces griseus.